The primary structure comprises 677 residues: UvrABC system protein B (677 aa).

The Helicase ATP-binding domain occupies 26 to 414; sequence DNLDAGLAHQ…SGNEVVEQVV (389 aa). 39 to 46 serves as a coordination point for ATP; the sequence is GVTGSGKT. Positions 92–115 match the Beta-hairpin motif; the sequence is YYDYYQPEAYVPTTDTFIEKDASI. One can recognise a Helicase C-terminal domain in the interval 432-598; that stretch reads QVDDLMSEIR…GLNKDITDVM (167 aa). The UVR domain occupies 637-672; that stretch reads MKEIDAKEKEMYKAAQNLEFEQAGKLRDEVAELREQ.

It belongs to the UvrB family. As to quaternary structure, forms a heterotetramer with UvrA during the search for lesions. Interacts with UvrC in an incision complex.

It is found in the cytoplasm. In terms of biological role, the UvrABC repair system catalyzes the recognition and processing of DNA lesions. A damage recognition complex composed of 2 UvrA and 2 UvrB subunits scans DNA for abnormalities. Upon binding of the UvrA(2)B(2) complex to a putative damaged site, the DNA wraps around one UvrB monomer. DNA wrap is dependent on ATP binding by UvrB and probably causes local melting of the DNA helix, facilitating insertion of UvrB beta-hairpin between the DNA strands. Then UvrB probes one DNA strand for the presence of a lesion. If a lesion is found the UvrA subunits dissociate and the UvrB-DNA preincision complex is formed. This complex is subsequently bound by UvrC and the second UvrB is released. If no lesion is found, the DNA wraps around the other UvrB subunit that will check the other stand for damage. This is UvrABC system protein B from Idiomarina loihiensis (strain ATCC BAA-735 / DSM 15497 / L2-TR).